Consider the following 131-residue polypeptide: Large ribosomal subunit protein bL19 (131 aa).

Positions 1 to 11 (MEETMNNQEAP) are enriched in polar residues. The tract at residues 1-20 (MEETMNNQEAPETSEEETVA) is disordered.

It belongs to the bacterial ribosomal protein bL19 family.

Functionally, this protein is located at the 30S-50S ribosomal subunit interface and may play a role in the structure and function of the aminoacyl-tRNA binding site. The sequence is that of Large ribosomal subunit protein bL19 from Dehalococcoides mccartyi (strain ATCC BAA-2100 / JCM 16839 / KCTC 5957 / BAV1).